The following is a 492-amino-acid chain: Histone-lysine N-methyltransferase PRDM7 (492 aa).

The segment at 1–22 (MSPERSQEESPEGDTERTERKP) is disordered. The 64-residue stretch at 23 to 86 (MVKDAFKDIS…RRQAIKLQVD (64 aa)) folds into the KRAB-related domain. Positions 111–179 (EQSKHQKGMP…ELRRKETEGK (69 aa)) are disordered. Residues 135–150 (GTPNLLNTSDSEQAQK) show a composition bias toward polar residues. The span at 167-179 (LKLELRRKETEGK) shows a compositional bias: basic and acidic residues. Residues 244–358 (PGLRIGPSGI…PGCELLVWSG (115 aa)) enclose the SET domain.

The protein localises to the nucleus. It is found in the chromosome. It carries out the reaction N(6),N(6)-dimethyl-L-lysyl(4)-[histone H3] + S-adenosyl-L-methionine = N(6),N(6),N(6)-trimethyl-L-lysyl(4)-[histone H3] + S-adenosyl-L-homocysteine + H(+). Its function is as follows. Histone methyltransferase that selectively methylates 'Lys-4' of dimethylated histone H3 (H3K4me2) to produce trimethylated 'Lys-4' histone H3 (H3K4me3). May play a role in epigenetic regulation of gene expression by defining an active chromatin state. This chain is Histone-lysine N-methyltransferase PRDM7, found in Homo sapiens (Human).